We begin with the raw amino-acid sequence, 441 residues long: Proline--tRNA ligase (441 aa).

This sequence belongs to the class-II aminoacyl-tRNA synthetase family. ProS type 2 subfamily. Homodimer.

It is found in the cytoplasm. The catalysed reaction is tRNA(Pro) + L-proline + ATP = L-prolyl-tRNA(Pro) + AMP + diphosphate. Catalyzes the attachment of proline to tRNA(Pro) in a two-step reaction: proline is first activated by ATP to form Pro-AMP and then transferred to the acceptor end of tRNA(Pro). In Methylorubrum extorquens (strain PA1) (Methylobacterium extorquens), this protein is Proline--tRNA ligase.